A 483-amino-acid chain; its full sequence is MAAKFLPRFWRSGSQAELLDFQNNNVVAEGKLDFEHGTLKGKSGRYGDDEEDVRRGHIEDLANHSLLNKLLRRTLVDSPHNVEVLQRDPTSPLFSVKSFEELHLKNELLRGIYAMGFNRPSKIQENALPMMLADPPQNLIAQSQSGTGKTAAFVLAMLSRVDANKKYPQCICLSPTFELALQTGKVVEEMGKFCAGIEVIYALRGNRPGKGSRLEAQIVIGTPGTVLDWCFKLRLITVENISVFVLDEADVMINVQGHSDHSVRVKRSMPKSCQMLLFSATFEDSVWAFAERIVPDPNIIKLKKEELTLKNIQQFYDQCENKEQKYSALCNLYGVITIAQAIVFCQTRKIASWLSQKLSDDGHQVALLSGELPVYDRADMIQRFREGREKVLVTTNVCARGIDVEQVSIVVNFDLPVNVDGSVDFETYLHRIGRTGRFGKKGIAVSLIENFFVYMLKEIEDHFNTKITKLNSMDMDEMGKIWK.

Residues 97-125 carry the Q motif motif; it reads KSFEELHLKNELLRGIYAMGFNRPSKIQE. In terms of domain architecture, Helicase ATP-binding spans 130-300; the sequence is MMLADPPQNL…ERIVPDPNII (171 aa). Residue 143-150 participates in ATP binding; sequence SQSGTGKT. Positions 247–250 match the DEAD box motif; sequence DEAD. Residues 311-478 form the Helicase C-terminal domain; the sequence is NIQQFYDQCE…KLNSMDMDEM (168 aa).

This sequence belongs to the DEAD box helicase family. In terms of tissue distribution, an mRNA component of germ plasm. Localizes to the granulo-fibrillar material (GFM) of the mitochondrial cloud in stage I oocytes. Associated, at a low level, with the periphery of mature germinal granules in later stage oocytes. Localizes to the vegetal cortex in stage II oocytes and segregates with germ plasm during early embryogenesis. In adults, expression is restricted to the ovary and, at a lower level, to spermatogonia, spermatocytes and spermatids of the testis.

Its subcellular location is the cytoplasm. The protein localises to the nucleus. The enzyme catalyses ATP + H2O = ADP + phosphate + H(+). Its function is as follows. ATP-dependent RNA helicase. The protein is ATP-dependent RNA helicase DDX25 of Xenopus laevis (African clawed frog).